A 297-amino-acid polypeptide reads, in one-letter code: Probable terminal-alkyne amino-acid exporter (297 aa).

9 consecutive transmembrane segments (helical) span residues Ala6–Val26, Gly32–Ala52, Leu65–Trp85, Ala95–Gly115, Ile123–Ala143, Trp150–Leu170, Val178–Val198, Thr212–Ala232, and Val249–Gly269. 2 consecutive EamA domains span residues Ala6–Ala137 and Trp150–Asn281.

It belongs to the EamA transporter family.

It localises to the cell membrane. In terms of biological role, probably involved in the export of terminal alkyne-containing amino acids, namely L-propargylglycine (Pra) and L-beta-ethynylserine, that are antibiotics synthesized by enzymes encoded in the same gene cluster. In Streptantibioticus cattleyicolor (strain ATCC 35852 / DSM 46488 / JCM 4925 / NBRC 14057 / NRRL 8057) (Streptomyces cattleya), this protein is Probable terminal-alkyne amino-acid exporter.